A 460-amino-acid chain; its full sequence is ATP synthase subunit beta (460 aa).

149 to 156 (GGAGVGKT) serves as a coordination point for ATP.

It belongs to the ATPase alpha/beta chains family. In terms of assembly, F-type ATPases have 2 components, CF(1) - the catalytic core - and CF(0) - the membrane proton channel. CF(1) has five subunits: alpha(3), beta(3), gamma(1), delta(1), epsilon(1). CF(0) has three main subunits: a(1), b(2) and c(9-12). The alpha and beta chains form an alternating ring which encloses part of the gamma chain. CF(1) is attached to CF(0) by a central stalk formed by the gamma and epsilon chains, while a peripheral stalk is formed by the delta and b chains.

It is found in the cell inner membrane. The catalysed reaction is ATP + H2O + 4 H(+)(in) = ADP + phosphate + 5 H(+)(out). Produces ATP from ADP in the presence of a proton gradient across the membrane. The catalytic sites are hosted primarily by the beta subunits. The chain is ATP synthase subunit beta from Nitrosomonas europaea (strain ATCC 19718 / CIP 103999 / KCTC 2705 / NBRC 14298).